A 408-amino-acid polypeptide reads, in one-letter code: Cobalt-precorrin-5B C(1)-methyltransferase (408 aa).

It belongs to the CbiD family.

The enzyme catalyses Co-precorrin-5B + S-adenosyl-L-methionine = Co-precorrin-6A + S-adenosyl-L-homocysteine. The protein operates within cofactor biosynthesis; adenosylcobalamin biosynthesis; cob(II)yrinate a,c-diamide from sirohydrochlorin (anaerobic route): step 6/10. Catalyzes the methylation of C-1 in cobalt-precorrin-5B to form cobalt-precorrin-6A. The protein is Cobalt-precorrin-5B C(1)-methyltransferase of Clostridioides difficile (strain 630) (Peptoclostridium difficile).